Here is a 121-residue protein sequence, read N- to C-terminus: Large ribosomal subunit protein eL31 (121 aa).

Belongs to the eukaryotic ribosomal protein eL31 family.

This chain is Large ribosomal subunit protein eL31 (RPL31), found in Panax ginseng (Korean ginseng).